The chain runs to 86 residues: Omega-theraphotoxin-Hhn1d (86 aa).

The first 21 residues, 1–21 (MKSIVFVALFGLALLAVVCSA), serve as a signal peptide directing secretion. A propeptide spanning residues 22–50 (SEDAHKELLKEVVRAMVVDKTDAVQAEER) is cleaved from the precursor. 3 disulfide bridges follow: Cys-52–Cys-66, Cys-59–Cys-71, and Cys-65–Cys-78.

This sequence belongs to the neurotoxin 10 (Hwtx-1) family. 17 (Hntx-9) subfamily. In terms of tissue distribution, expressed by the venom gland.

The protein resides in the secreted. Its function is as follows. Ion channel inhibitor. This is Omega-theraphotoxin-Hhn1d from Cyriopagopus hainanus (Chinese bird spider).